The following is a 230-amino-acid chain: Type II restriction enzyme Eco47I (230 aa).

The enzyme catalyses Endonucleolytic cleavage of DNA to give specific double-stranded fragments with terminal 5'-phosphates.. Its function is as follows. A P subtype restriction enzyme that recognizes the double-stranded sequence 5'-GGWCC-3' and cleaves after G-1. In Escherichia coli, this protein is Type II restriction enzyme Eco47I.